The following is a 207-amino-acid chain: Small ribosomal subunit protein uS4 (207 aa).

The segment at 31–55 (KCKLDSKPGQHGRTSGARTSDYGTQ) is disordered. Residues 42-53 (GRTSGARTSDYG) show a composition bias toward polar residues. The 64-residue stretch at 97–160 (SRLDNVVYRM…KKQARIVEAL (64 aa)) folds into the S4 RNA-binding domain.

It belongs to the universal ribosomal protein uS4 family. As to quaternary structure, part of the 30S ribosomal subunit. Contacts protein S5. The interaction surface between S4 and S5 is involved in control of translational fidelity.

Functionally, one of the primary rRNA binding proteins, it binds directly to 16S rRNA where it nucleates assembly of the body of the 30S subunit. With S5 and S12 plays an important role in translational accuracy. The protein is Small ribosomal subunit protein uS4 of Burkholderia thailandensis (strain ATCC 700388 / DSM 13276 / CCUG 48851 / CIP 106301 / E264).